The following is a 224-amino-acid chain: MSFTEDQEKIALEILSKDKHEFYEILKVDRKATDSEIKKAYRKLAIKLHPDKNSHPKAGEAFKVINRAFEVLSNEEKRSIYDRIGRDPDDRQMPSRGAASGFRGSAGGSPMGGGFEDMFFNSRFGGQRAGPPEDIFDFLFNAGGSPFGASPFGPSASTFSFGGPGGFRVYTNNRGGSPFMRQQPRSRQQQQQAEENAVNSQLKNMLVLFIIFIVLPMIKDYLFS.

The region spanning 18–87 (DKHEFYEILK…RSIYDRIGRD (70 aa)) is the J domain. Over residues 84–93 (IGRDPDDRQM) the composition is skewed to basic and acidic residues. The disordered stretch occupies residues 84–107 (IGRDPDDRQMPSRGAASGFRGSAG). Serine 109 carries the post-translational modification Phosphoserine. Positions 173 to 192 (NRGGSPFMRQQPRSRQQQQQ) are disordered. Positions 181–192 (RQQPRSRQQQQQ) are enriched in low complexity.

This is Protein HLJ1 (HLJ1) from Saccharomyces cerevisiae (strain ATCC 204508 / S288c) (Baker's yeast).